A 349-amino-acid polypeptide reads, in one-letter code: tRNA pseudouridine synthase D (349 aa).

F27 contacts substrate. Catalysis depends on D80, which acts as the Nucleophile. N129 contacts substrate. Residues 155 to 303 enclose the TRUD domain; that stretch reads GVPNYFGAQR…VEAARRAMLL (149 aa). F329 serves as a coordination point for substrate.

It belongs to the pseudouridine synthase TruD family.

The enzyme catalyses uridine(13) in tRNA = pseudouridine(13) in tRNA. In terms of biological role, responsible for synthesis of pseudouridine from uracil-13 in transfer RNAs. The polypeptide is tRNA pseudouridine synthase D (Escherichia coli O127:H6 (strain E2348/69 / EPEC)).